Consider the following 192-residue polypeptide: Probable GTP-binding protein EngB (192 aa).

Positions 22 to 192 constitute an EngB-type G domain; that stretch reads SLPEIVFVGR…LLEQLENYTG (171 aa). GTP is bound by residues 30–37, 57–61, 75–78, 142–145, and 172–174; these read GRSNVGKS, GKTQL, DLPG, TKYD, and YSA. Mg(2+)-binding residues include Ser37 and Thr59.

It belongs to the TRAFAC class TrmE-Era-EngA-EngB-Septin-like GTPase superfamily. EngB GTPase family. Mg(2+) serves as cofactor.

In terms of biological role, necessary for normal cell division and for the maintenance of normal septation. The sequence is that of Probable GTP-binding protein EngB from Prosthecochloris aestuarii (strain DSM 271 / SK 413).